Here is a 407-residue protein sequence, read N- to C-terminus: Chorismate synthase (407 aa).

R43 and R49 together coordinate NADP(+). Residues 143-145 (RSS), 264-265 (QA), G308, 323-327 (KPIST), and R349 contribute to the FMN site.

It belongs to the chorismate synthase family. Homotetramer. Requires FMNH2 as cofactor.

The catalysed reaction is 5-O-(1-carboxyvinyl)-3-phosphoshikimate = chorismate + phosphate. It functions in the pathway metabolic intermediate biosynthesis; chorismate biosynthesis; chorismate from D-erythrose 4-phosphate and phosphoenolpyruvate: step 7/7. Catalyzes the anti-1,4-elimination of the C-3 phosphate and the C-6 proR hydrogen from 5-enolpyruvylshikimate-3-phosphate (EPSP) to yield chorismate, which is the branch point compound that serves as the starting substrate for the three terminal pathways of aromatic amino acid biosynthesis. This reaction introduces a second double bond into the aromatic ring system. This Corynebacterium efficiens (strain DSM 44549 / YS-314 / AJ 12310 / JCM 11189 / NBRC 100395) protein is Chorismate synthase.